The primary structure comprises 473 residues: Aspartyl aminopeptidase 1 (473 aa).

Residue histidine 93 coordinates Zn(2+). Substrate is bound at residue histidine 168. Residues aspartate 262, glutamate 298, glutamate 299, and aspartate 343 each contribute to the Zn(2+) site. Glutamate 298 provides a ligand contact to substrate. Substrate-binding residues include aspartate 343, histidine 346, lysine 371, and tyrosine 378. Histidine 437 lines the Zn(2+) pocket.

It belongs to the peptidase M18 family. Tetrahedron-shaped homododecamer built from six homodimers. Interacts with autophagy receptor Nbr1. Zn(2+) is required as a cofactor.

It is found in the cytoplasm. It localises to the vacuole lumen. The enzyme catalyses Release of an N-terminal aspartate or glutamate from a peptide, with a preference for aspartate.. Its function is as follows. Aspartyl aminopeptidase that is able to remove aspartyl residue at N-terminus of angiotensin I. Also acts as a chaperone and efficiently suppressed the thermal aggregation of citrate synthase. In Schizosaccharomyces pombe (strain 972 / ATCC 24843) (Fission yeast), this protein is Aspartyl aminopeptidase 1 (ape4).